Consider the following 441-residue polypeptide: MTLAFGDWIVHRRWYAGRSRELVSAEPAVVTPLRDDLDHILLDVTYTDGTVERYQLVVRWADSPVAGFGEAATIGTALGPQGERIAYDALFDPDAARHLLRLVDASATVADLRFTREPGATLPLYAPPKVSSAEQSNTSVIFGKDAMLKVFRRVTPGINPDIELNRVLAQAGNRHVARLLGSFETSWAGPGTDRCALGMVTAFAANSAEGWDMATASAREMFADVVGSDFADESYRLGNAVASVHATLAEALGTSTEPFPVDTVLARLQSAARSAPELAGRAAAVEERYRRLDGRAITVQRVHGDLHLGQVLRTPDDWLLIDFEGEPGQPLDERRRPDSPLRDVAGVLRSFEYAAYQKLVELAPEQDADGRLADRARNWVDRNSAAFCAGYAAVAGDDPRRDGDVLAAYELDKAVYEAAYEARFRPSWLPIPMRSIDRILG.

This sequence belongs to the aminoglycoside phosphotransferase family. In terms of assembly, monomer.

The catalysed reaction is D-maltose + ATP = alpha-maltose 1-phosphate + ADP + H(+). It participates in glycan biosynthesis; glycogen biosynthesis. In terms of biological role, catalyzes the ATP-dependent phosphorylation of maltose to maltose 1-phosphate. Is involved in a branched alpha-glucan biosynthetic pathway from trehalose, together with TreS, GlgE and GlgB. This Mycolicibacterium vanbaalenii (strain DSM 7251 / JCM 13017 / BCRC 16820 / KCTC 9966 / NRRL B-24157 / PYR-1) (Mycobacterium vanbaalenii) protein is Maltokinase (mak).